The sequence spans 350 residues: Palmitoyltransferase erf2 (350 aa).

The Cytoplasmic segment spans residues M1–A86. A helical transmembrane segment spans residues F87–F107. Residues W108 to H112 are Lumenal-facing. Residues V113 to F133 traverse the membrane as a helical segment. At K134–R225 the chain is on the cytoplasmic side. The region spanning V182–L232 is the DHHC domain. Residue C212 is the S-palmitoyl cysteine intermediate of the active site. Residues Y226–F246 form a helical membrane-spanning segment. The Lumenal segment spans residues Y247–A270. A helical membrane pass occupies residues G271–F291. Over C292–V350 the chain is Cytoplasmic.

It belongs to the DHHC palmitoyltransferase family. ERF2/ZDHHC9 subfamily. As to quaternary structure, interacts with erf4. Autopalmitoylated.

It is found in the endoplasmic reticulum membrane. Its subcellular location is the golgi apparatus. The protein resides in the golgi stack membrane. The enzyme catalyses L-cysteinyl-[protein] + hexadecanoyl-CoA = S-hexadecanoyl-L-cysteinyl-[protein] + CoA. The erf2-erf4 complex is a palmitoyltransferase with a major role in driving sexual development. Palmitoylates ras1. Palmitoylates isp3. Palmitoylates rho3. The polypeptide is Palmitoyltransferase erf2 (Schizosaccharomyces pombe (strain 972 / ATCC 24843) (Fission yeast)).